The primary structure comprises 233 residues: Ribonuclease 3 (233 aa).

The RNase III domain occupies 6–135; sequence QDYLAKEFNI…FIGALYLDQG (130 aa). Position 48 (Glu-48) interacts with Mg(2+). The active site involves Asp-52. Asp-121 and Glu-124 together coordinate Mg(2+). Glu-124 is a catalytic residue. A DRBM domain is found at 161–230; the sequence is DAKTSLQEFL…AQQALDNMRN (70 aa). The segment at 205–233 is disordered; sequence IGEGKGSSKKHAEMQAAQQALDNMRNKNK.

The protein belongs to the ribonuclease III family. Homodimer. It depends on Mg(2+) as a cofactor.

The protein resides in the cytoplasm. It catalyses the reaction Endonucleolytic cleavage to 5'-phosphomonoester.. In terms of biological role, digests double-stranded RNA. Involved in the processing of primary rRNA transcript to yield the immediate precursors to the large and small rRNAs (23S and 16S). Processes some mRNAs, and tRNAs when they are encoded in the rRNA operon. Processes pre-crRNA and tracrRNA of type II CRISPR loci if present in the organism. The protein is Ribonuclease 3 of Limosilactobacillus reuteri (strain DSM 20016) (Lactobacillus reuteri).